The following is a 675-amino-acid chain: DNA ligase (675 aa).

NAD(+) contacts are provided by residues 35–39, 84–85, and Glu-115; these read DSEYD and SL. Lys-117 (N6-AMP-lysine intermediate) is an active-site residue. The NAD(+) site is built by Arg-138, Glu-175, Lys-292, and Lys-316. Zn(2+) contacts are provided by Cys-410, Cys-413, Cys-428, and Cys-434. The BRCT domain maps to 593-675; that stretch reads QIVQPLLGRT…RNFLDDTSFP (83 aa).

The protein belongs to the NAD-dependent DNA ligase family. LigA subfamily. Requires Mg(2+) as cofactor. The cofactor is Mn(2+).

The enzyme catalyses NAD(+) + (deoxyribonucleotide)n-3'-hydroxyl + 5'-phospho-(deoxyribonucleotide)m = (deoxyribonucleotide)n+m + AMP + beta-nicotinamide D-nucleotide.. In terms of biological role, DNA ligase that catalyzes the formation of phosphodiester linkages between 5'-phosphoryl and 3'-hydroxyl groups in double-stranded DNA using NAD as a coenzyme and as the energy source for the reaction. It is essential for DNA replication and repair of damaged DNA. In Nitrosococcus oceani (strain ATCC 19707 / BCRC 17464 / JCM 30415 / NCIMB 11848 / C-107), this protein is DNA ligase.